We begin with the raw amino-acid sequence, 445 residues long: POU domain, class 3, transcription factor 2 (445 aa).

Disordered regions lie at residues alanine 64–alanine 173 and leucine 203–serine 269. The segment covering histidine 67–glycine 90 has biased composition (gly residues). Low complexity-rich tracts occupy residues glutamine 125–glutamine 151 and histidine 163–alanine 173. The span at leucine 217–histidine 226 shows a compositional bias: basic and acidic residues. The segment covering alanine 227–proline 237 has biased composition (basic residues). Over residues glutamine 239–histidine 253 the composition is skewed to pro residues. The POU-specific domain maps to glutamate 264–aspartate 338. Serine 343 carries the post-translational modification Phosphoserine. Residues lysine 356–threonine 415 constitute a DNA-binding region (homeobox). The tract at residues glutamate 411 to glutamine 445 is disordered.

It belongs to the POU transcription factor family. Class-3 subfamily. As to quaternary structure, interacts with PQBP1. Interaction with ISL1. In terms of tissue distribution, expressed specifically in the neuroectodermal cell lineage.

It localises to the nucleus. Functionally, transcription factor that plays a key role in neuronal differentiation. Binds preferentially to the recognition sequence which consists of two distinct half-sites, ('GCAT') and ('TAAT'), separated by a non-conserved spacer region of 0, 2, or 3 nucleotides. Acts as a transcriptional activator when binding cooperatively with SOX4, SOX11, or SOX12 to gene promoters. The combination of three transcription factors, ASCL1, POU3F2/BRN2 and MYT1L, is sufficient to reprogram fibroblasts and other somatic cells into induced neuronal (iN) cells in vitro. Acts downstream of ASCL1, accessing chromatin that has been opened by ASCL1, and promotes transcription of neuronal genes. The protein is POU domain, class 3, transcription factor 2 (Pou3f2) of Mus musculus (Mouse).